The primary structure comprises 64 residues: UPF0434 protein BOV_A0835 (64 aa).

Belongs to the UPF0434 family.

This chain is UPF0434 protein BOV_A0835, found in Brucella ovis (strain ATCC 25840 / 63/290 / NCTC 10512).